The following is a 1218-amino-acid chain: Protein dispatched (1218 aa).

Residues Tyr21–Leu41 traverse the membrane as a helical segment. The disordered stretch occupies residues Val99–Asp135. Basic residues predominate over residues His104–Lys124. Residues Asn127, Asn176, Asn197, Asn264, Asn319, and Asn388 are each glycosylated (N-linked (GlcNAc...) asparagine). The 195-residue stretch at Ala430–Ile624 folds into the SSD domain. 6 consecutive transmembrane segments (helical) span residues Leu443–Trp463, Leu473–Val493, Leu504–Ile524, Ala570–Ser590, Cys598–Leu618, and Ala670–Trp690. 3 N-linked (GlcNAc...) asparagine glycosylation sites follow: Asn767, Asn883, and Asn891. 5 consecutive transmembrane segments (helical) span residues Leu975 to Val995, Ser996 to Leu1016, Ile1019 to Tyr1039, Ile1058 to Ala1078, and Ile1087 to Met1107.

This sequence belongs to the dispatched family.

It localises to the membrane. Its function is as follows. Segment polarity protein which functions in hedgehog (Hh) signaling. Regulates the trafficking and the release of cholesterol-modified hedgehog protein from cells of the posterior compartment (P cells) and is hence required for the effective production of the Hh signal. This chain is Protein dispatched (disp), found in Drosophila melanogaster (Fruit fly).